Here is a 118-residue protein sequence, read N- to C-terminus: MGIKYSNKINKIRTFALSLVFIGLFIAYLGVFFRENIIIMTTFMMVGFLAVIASTVVYFWIGMLSTKTVQIICPSCDKPTKMLGRVDACMHCNQPLTMDRNLEGKEFDEKYNKKSYKS.

The next 2 helical transmembrane spans lie at 12–32 (IRTF…LGVF) and 43–63 (FMMV…WIGM).

This sequence belongs to the UPF0295 family.

The protein localises to the cell membrane. The chain is UPF0295 protein BCE_0593 from Bacillus cereus (strain ATCC 10987 / NRS 248).